We begin with the raw amino-acid sequence, 271 residues long: Eukaryotic translation initiation factor 3 subunit G (271 aa).

2 disordered regions span residues methionine 1–isoleucine 29 and lysine 143–arginine 185. One can recognise an RRM domain in the interval serine 189–proline 267.

The protein belongs to the eIF-3 subunit G family. Component of the eukaryotic translation initiation factor 3 (eIF-3) complex.

The protein localises to the cytoplasm. In terms of biological role, RNA-binding component of the eukaryotic translation initiation factor 3 (eIF-3) complex, which is involved in protein synthesis of a specialized repertoire of mRNAs and, together with other initiation factors, stimulates binding of mRNA and methionyl-tRNAi to the 40S ribosome. The eIF-3 complex specifically targets and initiates translation of a subset of mRNAs involved in cell proliferation. This subunit can bind 18S rRNA. The protein is Eukaryotic translation initiation factor 3 subunit G of Anopheles gambiae (African malaria mosquito).